An 827-amino-acid polypeptide reads, in one-letter code: Centrosomal protein of 95 kDa (827 aa).

Disordered regions lie at residues 115-145 (ISES…ERTE), 183-249 (GDTA…MVPS), 308-372 (FLTS…MSEK), 388-476 (LGDR…DSCH), and 489-558 (ELRK…KASP). Residues 123–145 (SETEQYSKDSHGEEAGEDLERTE) show a composition bias toward basic and acidic residues. A compositionally biased stretch (polar residues) spans 187–199 (HTFSQRSNGAQNS). Composition is skewed to basic and acidic residues over residues 327–343 (EATR…DENR) and 360–372 (PLTE…MSEK). Residues Ser447, Ser449, and Ser451 each carry the phosphoserine modification. Coiled coils occupy residues 584-633 (LTKM…VKKE) and 701-795 (LQIQ…DDDA).

It localises to the cytoplasm. The protein localises to the cytoskeleton. The protein resides in the microtubule organizing center. Its subcellular location is the centrosome. It is found in the spindle pole. This Mus musculus (Mouse) protein is Centrosomal protein of 95 kDa (Cep95).